The sequence spans 222 residues: Eukaryotic translation initiation factor 3 subunit K (222 aa).

A PCI domain is found at 46–208 (YDLEANLAVL…KIKTKNITEK (163 aa)).

This sequence belongs to the eIF-3 subunit K family. In terms of assembly, component of the eukaryotic translation initiation factor 3 (eIF-3) complex. The eIF-3 complex interacts with pix.

The protein localises to the cytoplasm. In terms of biological role, component of the eukaryotic translation initiation factor 3 (eIF-3) complex, which is involved in protein synthesis of a specialized repertoire of mRNAs and, together with other initiation factors, stimulates binding of mRNA and methionyl-tRNAi to the 40S ribosome. The eIF-3 complex specifically targets and initiates translation of a subset of mRNAs involved in cell proliferation. This is Eukaryotic translation initiation factor 3 subunit K from Drosophila mojavensis (Fruit fly).